The primary structure comprises 227 residues: Esterase OVCA2 (227 aa).

Catalysis depends on charge relay system residues Ser119, Asp179, and His206.

Belongs to the LovG family.

The catalysed reaction is a carboxylic ester + H2O = an alcohol + a carboxylate + H(+). Functionally, exhibits ester hydrolase activity with a strong preference for long-chain alkyl ester substrates and high selectivity against a variety of short, branched, and substituted esters. Is able to hydrolyze ester bonds within a wide range of p-nitrophenyl derivatives (C2-C14) in vitro, with a strong preference toward substrates of &gt;8 carbons. The chain is Esterase OVCA2 (OVCA2) from Bos taurus (Bovine).